The chain runs to 426 residues: MDERQTVLPLTVHLLASSGDSLAFQLAVDRLLHRICPDVRLFLVSERAAPIKLYECQTKRPEFPGISVTLFLREDLGEERIDLLQSFFQLPPWTHVIADFQQGRSCPFKLPLCDYYSLDSHMPVWEMRHVHYGTEIVRLTVYCSCDNYEDAVRLYETILQKEATTQKAGFCFFVLYSTTHVSVQLSIKQLHPGISVQVKDACALQFAIHAVGQLVPLLPYPCVPISDARWQTQDYDGNKILLLVVDHTTATQRKAESKAASTLMVIPDNPSLPFTSLNRSMEAKVQNAKDTINPKNISVSSNYLDQSETIYNNTNPSQKLLAPHGIQMKETESNVDTGYTVVSLTSQQAYICELSENQQSAPAFEDIYFSTSQRKSPQNLPFKLEESSSSDVVEGSKALGMTGSMFHSERYQIHNSNISEEEEFFI.

Belongs to the FAM124 family.

Its subcellular location is the nucleus. The protein is Protein FAM124B (fam124b) of Xenopus tropicalis (Western clawed frog).